The following is a 294-amino-acid chain: Sperm acrosome membrane-associated protein 1 (294 aa).

Positions Met-1–Gly-29 are cleaved as a signal peptide. Topologically, residues Thr-30 to Phe-221 are extracellular. N-linked (GlcNAc...) asparagine glycosylation is present at Asn-31. A disordered region spans residues Ala-42–Val-70. Over residues Glu-46–Thr-58 the composition is skewed to acidic residues. A helical transmembrane segment spans residues Val-222–Ile-242. Topologically, residues Asn-243 to Glu-294 are cytoplasmic. Ser-256 is subject to Phosphoserine. The segment covering Pro-258–Val-267 has biased composition (polar residues). The interval Pro-258 to Glu-294 is disordered. Residue Tyr-269 is modified to Phosphotyrosine. The span at Pro-283–Glu-294 shows a compositional bias: acidic residues. Ser-290 is subject to Phosphoserine.

As to quaternary structure, interacts with CYLC1; the interaction may be relevant for proper acrosome attachment to the nuclear envelope. Post-translationally, N-glycosylated. As to expression, testis specific.

It localises to the cytoplasmic vesicle. The protein resides in the secretory vesicle. Its subcellular location is the acrosome inner membrane. Its function is as follows. Plays a role in acrosome formation and establishment of normal sperm morphology during spermatogenesis. Important for male fertility. The polypeptide is Sperm acrosome membrane-associated protein 1 (SPACA1) (Homo sapiens (Human)).